A 247-amino-acid polypeptide reads, in one-letter code: 1-(5-phosphoribosyl)-5-[(5-phosphoribosylamino)methylideneamino] imidazole-4-carboxamide isomerase (247 aa).

Aspartate 8 functions as the Proton acceptor in the catalytic mechanism. Aspartate 131 serves as the catalytic Proton donor.

The protein belongs to the HisA/HisF family.

The protein resides in the cytoplasm. It carries out the reaction 1-(5-phospho-beta-D-ribosyl)-5-[(5-phospho-beta-D-ribosylamino)methylideneamino]imidazole-4-carboxamide = 5-[(5-phospho-1-deoxy-D-ribulos-1-ylimino)methylamino]-1-(5-phospho-beta-D-ribosyl)imidazole-4-carboxamide. It participates in amino-acid biosynthesis; L-histidine biosynthesis; L-histidine from 5-phospho-alpha-D-ribose 1-diphosphate: step 4/9. In Ralstonia pickettii (strain 12J), this protein is 1-(5-phosphoribosyl)-5-[(5-phosphoribosylamino)methylideneamino] imidazole-4-carboxamide isomerase.